The following is a 167-amino-acid chain: Methyl-coenzyme M reductase II operon protein D (167 aa).

In terms of assembly, MCR is composed of three subunits: alpha, beta, and gamma. The function of protein D is not known.

The sequence is that of Methyl-coenzyme M reductase II operon protein D (mrtD) from Methanocaldococcus jannaschii (strain ATCC 43067 / DSM 2661 / JAL-1 / JCM 10045 / NBRC 100440) (Methanococcus jannaschii).